Here is a 251-residue protein sequence, read N- to C-terminus: Triosephosphate isomerase (251 aa).

Residue 9-11 (NWK) coordinates substrate. The active-site Electrophile is the His-95. Catalysis depends on Glu-167, which acts as the Proton acceptor. Substrate-binding positions include Gly-173, Ser-213, and 234–235 (GG). Ser-213 carries the phosphoserine modification.

It belongs to the triosephosphate isomerase family. In terms of assembly, homodimer.

The protein localises to the cytoplasm. It carries out the reaction D-glyceraldehyde 3-phosphate = dihydroxyacetone phosphate. It participates in carbohydrate biosynthesis; gluconeogenesis. Its pathway is carbohydrate degradation; glycolysis; D-glyceraldehyde 3-phosphate from glycerone phosphate: step 1/1. Involved in the gluconeogenesis. Catalyzes stereospecifically the conversion of dihydroxyacetone phosphate (DHAP) to D-glyceraldehyde-3-phosphate (G3P). This is Triosephosphate isomerase from Halalkalibacterium halodurans (strain ATCC BAA-125 / DSM 18197 / FERM 7344 / JCM 9153 / C-125) (Bacillus halodurans).